The sequence spans 115 residues: Holo-[acyl-carrier-protein] synthase (115 aa).

Residues aspartate 8 and glutamate 56 each contribute to the Mg(2+) site.

This sequence belongs to the P-Pant transferase superfamily. AcpS family. Requires Mg(2+) as cofactor.

It localises to the cytoplasm. The enzyme catalyses apo-[ACP] + CoA = holo-[ACP] + adenosine 3',5'-bisphosphate + H(+). Its function is as follows. Transfers the 4'-phosphopantetheine moiety from coenzyme A to a Ser of acyl-carrier-protein. The sequence is that of Holo-[acyl-carrier-protein] synthase from Ureaplasma parvum serovar 3 (strain ATCC 27815 / 27 / NCTC 11736).